The following is a 306-amino-acid chain: 2-dehydro-3-deoxy-D-gluconate/2-dehydro-3-deoxy-phosphogluconate aldolase (306 aa).

Residues 61–62 (TT), 148–150 (YNY), and 173–175 (KDT) each bind substrate. The Schiff-base intermediate with substrate role is filled by lysine 173.

The protein belongs to the DapA family. KDPG aldolase subfamily. Homotetramer; dimer of dimers.

It catalyses the reaction 2-dehydro-3-deoxy-6-phospho-D-gluconate = D-glyceraldehyde 3-phosphate + pyruvate. The enzyme catalyses 2-dehydro-3-deoxy-D-gluconate = D-glyceraldehyde + pyruvate. The protein operates within carbohydrate acid metabolism; 2-dehydro-3-deoxy-D-gluconate degradation; D-glyceraldehyde 3-phosphate and pyruvate from 2-dehydro-3-deoxy-D-gluconate: step 2/2. In terms of biological role, involved in the degradation of glucose via the Entner-Doudoroff pathway. Catalyzes the reversible cleavage of 2-keto-3-deoxy-6-phosphogluconate (KDPG) and 2-keto-3-deoxygluconate (KDG) forming pyruvate and glyceraldehyde 3-phosphate or glyceraldehyde, respectively. It is not able to use 2-keto-3-deoxy-6-phosphogalactonate (KDPGal) and 2-keto-3-deoxygalactonate (KDGal) as substrate. This is 2-dehydro-3-deoxy-D-gluconate/2-dehydro-3-deoxy-phosphogluconate aldolase (kdgA) from Thermoproteus tenax.